Reading from the N-terminus, the 242-residue chain is ATP synthase subunit a (242 aa).

6 consecutive transmembrane segments (helical) span residues 29–49, 84–104, 114–134, 140–160, 181–201, and 203–223; these read SSIY…LAFY, FIPL…LGMT, IIVT…VGFI, FLTL…MIVI, MAGH…MIYL, and FLPI…AILQ.

This sequence belongs to the ATPase A chain family. F-type ATPases have 2 components, CF(1) - the catalytic core - and CF(0) - the membrane proton channel. CF(1) has five subunits: alpha(3), beta(3), gamma(1), delta(1), epsilon(1). CF(0) has three main subunits: a(1), b(2) and c(9-12). The alpha and beta chains form an alternating ring which encloses part of the gamma chain. CF(1) is attached to CF(0) by a central stalk formed by the gamma and epsilon chains, while a peripheral stalk is formed by the delta and b chains.

The protein localises to the cell inner membrane. Functionally, key component of the proton channel; it plays a direct role in the translocation of protons across the membrane. The polypeptide is ATP synthase subunit a (Rickettsia typhi (strain ATCC VR-144 / Wilmington)).